We begin with the raw amino-acid sequence, 619 residues long: Auxin efflux carrier component 7 (619 aa).

Residues 1–7 (MITWHDL) lie on the Extracellular side of the membrane. A helical transmembrane segment spans residues 8-28 (YTVLTAVIPLYVAMILAYGSV). The Cytoplasmic segment spans residues 29–38 (RWWKIFSPDQ). A helical transmembrane segment spans residues 39-59 (CSGINRFVAIFAVPLLSFHFI). Residue valine 51 participates in (indol-3-yl)acetate binding. The Extracellular segment spans residues 60–71 (SSNNPYAMNLRF). Residues 72 to 92 (IAADTLQKLIMLTLLIIWANF) form a helical membrane-spanning segment. Topologically, residues 93–101 (TRSGSLEWS) are cytoplasmic. Residues 102-122 (ITIFSLSTLPNTLVMGIPLLI) form a helical membrane-spanning segment. Residues asparagine 112 and leucine 114 each coordinate (indol-3-yl)acetate. Over 123-131 (AMYGEYSGS) the chain is Extracellular. A helical membrane pass occupies residues 132-152 (LMVQIVVLQCIIWYTLLLFLF). Residue tyrosine 145 coordinates (indol-3-yl)acetate. Residues 153–479 (EYRGAKILIM…LIRNPNTYSS (327 aa)) are Cytoplasmic-facing. Serine 229, serine 246, and serine 286 each carry phosphoserine. Residues 306 to 340 (GAPGSYPAPNPEFSTGNKTGSKAPKENHHHVGKSN) are disordered. Phosphothreonine is present on threonine 320. Residue serine 357 is modified to Phosphoserine. Residues 393-413 (HTQNGENKAGPMNGDYGGEEE) are disordered. The chain crosses the membrane as a helical span at residues 480–500 (LIGLIWALVAFRWDVAMPKII). Residues 501–503 (QQS) lie on the Extracellular side of the membrane. A helical membrane pass occupies residues 504–524 (ISILSDAGLGMAMFSLGLFMA). Topologically, residues 525-538 (LQPKLIACGNSTAT) are cytoplasmic. The helical transmembrane segment at 539-559 (FAMAVRFFTGPAVMAVAAMAI) threads the bilayer. Residues 560-564 (GLRGD) lie on the Extracellular side of the membrane. Residues 565–585 (LLRVAIVQAALPQGIVPFVFA) form a helical membrane-spanning segment. (indol-3-yl)acetate-binding residues include isoleucine 579 and valine 580. The Cytoplasmic segment spans residues 586-598 (KEYNVHPAILSTG). Residues 599–619 (VIFGMLIALPITLVYYILLGL) traverse the membrane as a helical segment.

This sequence belongs to the auxin efflux carrier (TC 2.A.69.1) family. In terms of assembly, homodimer.

Its subcellular location is the cell membrane. Its function is as follows. Acts as a component of the auxin efflux carrier. Mediates the initial auxin gradient which contributes to the establishment of the apical-basal axis in early embryogenesis. Together with PIN3 and PIN4, involved in the connective auxin transport (CAT) that ensures communication across the shoot system, and modulates strigolactone-mediated shoot branching control. The abcb19 pin3 pin4 pin7 quadruple mutant exhibits an additive phenotype on strigolactone-mediated bud outgrowth responses and shoot branching control. The polypeptide is Auxin efflux carrier component 7 (Arabidopsis thaliana (Mouse-ear cress)).